Here is a 143-residue protein sequence, read N- to C-terminus: Transcriptional regulator MraZ (143 aa).

SpoVT-AbrB domains lie at 5–47 (EYHH…PIEE) and 76–119 (AMES…SAER).

This sequence belongs to the MraZ family. Forms oligomers.

The protein localises to the cytoplasm. Its subcellular location is the nucleoid. The sequence is that of Transcriptional regulator MraZ from Lactobacillus gasseri (strain ATCC 33323 / DSM 20243 / BCRC 14619 / CIP 102991 / JCM 1131 / KCTC 3163 / NCIMB 11718 / NCTC 13722 / AM63).